The sequence spans 215 residues: MAPGARISLLLLITFTLLGPQRSGAFPAMPLSSLFANAVLRAQHLHQLVADTYKEFERTYIPEAQRHSIQSTQTAFCFSETIPAPTGKDEAQQRSDVELLRFSLLLIQSWLSPVQFLSRVFTNSLVFGTSDRVYEKLRDLEEGIQALMQELEDGSSRGGLVLKTTYDKFDTNLRSDEALLKNYGLLSCFKKDLHKAETYLRVMKCRRFVESSCAF.

A signal peptide spans 1–25 (MAPGARISLLLLITFTLLGPQRSGA). A Zn(2+)-binding site is contributed by histidine 44. An intrachain disulfide couples cysteine 77 to cysteine 188. Serine 130 bears the Phosphoserine mark. Glutamate 197 contributes to the Zn(2+) binding site. A disulfide bond links cysteine 205 and cysteine 213.

Belongs to the somatotropin/prolactin family.

It localises to the secreted. In terms of biological role, plays an important role in growth control. Its major role in stimulating body growth is to stimulate the liver and other tissues to secrete IGF1. It stimulates both the differentiation and proliferation of myoblasts. It also stimulates amino acid uptake and protein synthesis in muscle and other tissues. In Trichosurus vulpecula (Brush-tailed possum), this protein is Somatotropin (GH1).